We begin with the raw amino-acid sequence, 261 residues long: Triosephosphate isomerase (261 aa).

Position 10 to 12 (10 to 12) interacts with substrate; that stretch reads NWK. The Electrophile role is filled by His100. Catalysis depends on Glu172, which acts as the Proton acceptor. Residues Gly178, Ser218, and 239–240 each bind substrate; that span reads GG.

The protein belongs to the triosephosphate isomerase family. Homodimer.

It is found in the cytoplasm. The catalysed reaction is D-glyceraldehyde 3-phosphate = dihydroxyacetone phosphate. The protein operates within carbohydrate biosynthesis; gluconeogenesis. It functions in the pathway carbohydrate degradation; glycolysis; D-glyceraldehyde 3-phosphate from glycerone phosphate: step 1/1. Functionally, involved in the gluconeogenesis. Catalyzes stereospecifically the conversion of dihydroxyacetone phosphate (DHAP) to D-glyceraldehyde-3-phosphate (G3P). The chain is Triosephosphate isomerase from Rhodococcus jostii (strain RHA1).